A 157-amino-acid polypeptide reads, in one-letter code: MSMTLVAEHYTKIIATKLLETLSSNVSRKGFVEGNPCFERVVQFIEENVKRSISLEQLAELALMSPRSLYTMFEKHTGTTPMNYIRNRKLECVRACLSNPTTNIRSITEVALDYGFLHLGRFAEKYRSTFGELPSDTLSLHKMKCIDSRESSLSSLF.

The HTH araC/xylS-type domain occupies 39-140; sequence ERVVQFIEEN…GELPSDTLSL (102 aa). 2 consecutive DNA-binding regions (H-T-H motif) follow at residues 56–77 and 107–130; these read EQLA…EKHT and ITEV…RSTF.

Its subcellular location is the cytoplasm. Regulatory protein of the TOL plasmid xyl operons. XylS activates the xylXYZLTEGFJQKIH operon required for the degradation of toluene, m-xylene and p-xylene. This Pseudomonas putida (Arthrobacter siderocapsulatus) protein is XylDLEGF operon transcriptional activator 2 (xylS2).